The following is a 301-amino-acid chain: Probable alpha-L-glutamate ligase (301 aa).

The ATP-grasp domain maps to 104–287 (LQLLSRKGIG…VAGIIIEYLE (184 aa)). Residues Lys141, 178-179 (EY), Asp187, and 211-213 (RSN) contribute to the ATP site. Mg(2+)-binding residues include Asp248, Glu260, and Asn262. Mn(2+) contacts are provided by Asp248, Glu260, and Asn262.

It belongs to the RimK family. Mg(2+) is required as a cofactor. The cofactor is Mn(2+).

The chain is Probable alpha-L-glutamate ligase from Azotobacter vinelandii (strain DJ / ATCC BAA-1303).